Reading from the N-terminus, the 222-residue chain is MADS-box transcription factor 26 (222 aa).

Residues 1–61 (MARGKVQLRR…GKLYDLATTG (61 aa)) form the MADS-box domain. Residues 85–176 (RMDPKQEAMV…QEKIVEQNGL (92 aa)) form the K-box domain.

It is found in the nucleus. Functionally, probable transcription factor. The protein is MADS-box transcription factor 26 (MADS26) of Oryza sativa subsp. indica (Rice).